Consider the following 327-residue polypeptide: Tetraacyldisaccharide 4'-kinase (327 aa).

58–65 (TVGGTGKT) lines the ATP pocket.

It belongs to the LpxK family.

It catalyses the reaction a lipid A disaccharide + ATP = a lipid IVA + ADP + H(+). The protein operates within glycolipid biosynthesis; lipid IV(A) biosynthesis; lipid IV(A) from (3R)-3-hydroxytetradecanoyl-[acyl-carrier-protein] and UDP-N-acetyl-alpha-D-glucosamine: step 6/6. Its function is as follows. Transfers the gamma-phosphate of ATP to the 4'-position of a tetraacyldisaccharide 1-phosphate intermediate (termed DS-1-P) to form tetraacyldisaccharide 1,4'-bis-phosphate (lipid IVA). This is Tetraacyldisaccharide 4'-kinase from Alcanivorax borkumensis (strain ATCC 700651 / DSM 11573 / NCIMB 13689 / SK2).